A 394-amino-acid polypeptide reads, in one-letter code: Ribulose bisphosphate carboxylase large chain (394 aa).

Lysine 5 bears the N6,N6,N6-trimethyllysine mark. Substrate is bound by residues asparagine 114 and threonine 164. Lysine 166 functions as the Proton acceptor in the catalytic mechanism. Lysine 168 is a binding site for substrate. Mg(2+)-binding residues include lysine 192, aspartate 194, and glutamate 195. N6-carboxylysine is present on lysine 192. Histidine 285 serves as the catalytic Proton acceptor. Residues arginine 286, histidine 318, and serine 370 each contribute to the substrate site.

It belongs to the RuBisCO large chain family. Type I subfamily. Heterohexadecamer of 8 large chains and 8 small chains. It depends on Mg(2+) as a cofactor.

The protein resides in the plastid. Its subcellular location is the chloroplast. It catalyses the reaction 2 (2R)-3-phosphoglycerate + 2 H(+) = D-ribulose 1,5-bisphosphate + CO2 + H2O. It carries out the reaction D-ribulose 1,5-bisphosphate + O2 = 2-phosphoglycolate + (2R)-3-phosphoglycerate + 2 H(+). Functionally, ruBisCO catalyzes two reactions: the carboxylation of D-ribulose 1,5-bisphosphate, the primary event in carbon dioxide fixation, as well as the oxidative fragmentation of the pentose substrate in the photorespiration process. Both reactions occur simultaneously and in competition at the same active site. The polypeptide is Ribulose bisphosphate carboxylase large chain (rbcL) (Nymphaea odorata (White water lily)).